The following is a 257-amino-acid chain: NAD-capped RNA hydrolase NudC (257 aa).

Residue Arg-69 coordinates substrate. Zn(2+)-binding residues include Cys-98 and Cys-101. Residue Glu-111 participates in substrate binding. Positions 116 and 119 each coordinate Zn(2+). Residue Tyr-124 coordinates substrate. The Nudix hydrolase domain occupies 125–248 (PQIAPCIIVA…TVARRLIEDT (124 aa)). Residues Ala-158, Glu-174, and Glu-178 each coordinate a divalent metal cation. The Nudix box motif lies at 159–180 (GFVEVGETLEQAVAREVMEESG). Substrate is bound at residue 192–199 (QPWPFPQS). Residue Glu-219 coordinates a divalent metal cation. Substrate is bound at residue Ala-241.

Belongs to the Nudix hydrolase family. NudC subfamily. Homodimer. It depends on Mg(2+) as a cofactor. Mn(2+) is required as a cofactor. Requires Zn(2+) as cofactor.

It carries out the reaction a 5'-end NAD(+)-phospho-ribonucleoside in mRNA + H2O = a 5'-end phospho-adenosine-phospho-ribonucleoside in mRNA + beta-nicotinamide D-ribonucleotide + 2 H(+). The catalysed reaction is NAD(+) + H2O = beta-nicotinamide D-ribonucleotide + AMP + 2 H(+). It catalyses the reaction NADH + H2O = reduced beta-nicotinamide D-ribonucleotide + AMP + 2 H(+). Functionally, mRNA decapping enzyme that specifically removes the nicotinamide adenine dinucleotide (NAD) cap from a subset of mRNAs by hydrolyzing the diphosphate linkage to produce nicotinamide mononucleotide (NMN) and 5' monophosphate mRNA. The NAD-cap is present at the 5'-end of some mRNAs and stabilizes RNA against 5'-processing. Has preference for mRNAs with a 5'-end purine. Catalyzes the hydrolysis of a broad range of dinucleotide pyrophosphates. The sequence is that of NAD-capped RNA hydrolase NudC from Salmonella schwarzengrund (strain CVM19633).